The primary structure comprises 439 residues: Trigger factor (439 aa).

The 86-residue stretch at 170 to 255 folds into the PPIase FKBP-type domain; sequence GDTVVIDFDG…IHELKKLETP (86 aa).

Belongs to the FKBP-type PPIase family. Tig subfamily.

It localises to the cytoplasm. It catalyses the reaction [protein]-peptidylproline (omega=180) = [protein]-peptidylproline (omega=0). In terms of biological role, involved in protein export. Acts as a chaperone by maintaining the newly synthesized protein in an open conformation. Functions as a peptidyl-prolyl cis-trans isomerase. In Oenococcus oeni (strain ATCC BAA-331 / PSU-1), this protein is Trigger factor.